We begin with the raw amino-acid sequence, 396 residues long: Tryptophan synthase beta chain (396 aa).

Residue K88 is modified to N6-(pyridoxal phosphate)lysine.

This sequence belongs to the TrpB family. Tetramer of two alpha and two beta chains. Requires pyridoxal 5'-phosphate as cofactor.

It catalyses the reaction (1S,2R)-1-C-(indol-3-yl)glycerol 3-phosphate + L-serine = D-glyceraldehyde 3-phosphate + L-tryptophan + H2O. It functions in the pathway amino-acid biosynthesis; L-tryptophan biosynthesis; L-tryptophan from chorismate: step 5/5. In terms of biological role, the beta subunit is responsible for the synthesis of L-tryptophan from indole and L-serine. In Actinobacillus pleuropneumoniae serotype 7 (strain AP76), this protein is Tryptophan synthase beta chain.